Here is a 500-residue protein sequence, read N- to C-terminus: MKFHLEVSLKLSGDAANAEGDLAEFFEKQAVDLLKKGAPEGMGAKVAGWRITGDQLEIKIESDRYVRAHDALLRLRKPLANLLGRKHRLGIRGINVSRFEIQIESNRQITHRIPYVRESRYEDGLLTLILGVEDPKRGWTWMLENRIPDRIVNLLEEKLQSYGGKAEHWELLWESPPREFKFSGDPTQEMVKRGWIKHGSARGQWIHGPQSTHLFRTFERIVLEEILVPLGYREMIFPKLDTWDVWKRSGHAQGVYPEIYYVCPPKSRDPAFWEEVIDYYKVTHEIPLDLIKEKIDYPIGGMCYAQCPTFWVFLQGATLPNDELPIKVFDRSGTSHRYESGGIHGIERVDEFHRIEIVWLGTKQQVMEEAERLKERYKHIFEEILELRWRMAWVTPWFMAQEGRTGLAEMEGAGTIDYEALLPYSGNWIEFQNLSVNGEKYPKGFSVKAQSGESLWSGCSGVGLERWTSVFLGQKGLDPDNWPDEFRKRFGEMPRGIRFL.

Ala-305 contacts L-serine. A Zn(2+)-binding site is contributed by Cys-307. Arg-337 is a binding site for L-serine. ATP contacts are provided by residues Arg-337–Glu-339 and Arg-348–Val-349. L-serine is bound by residues Arg-354–Glu-356 and Gln-401. Glu-356 lines the Zn(2+) pocket. Residue Glu-430 coordinates ATP. Asn-433 serves as a coordination point for L-serine. Cys-459 provides a ligand contact to Zn(2+). Arg-466 contributes to the ATP binding site.

Belongs to the class-II aminoacyl-tRNA synthetase family. Type-2 seryl-tRNA synthetase subfamily. Homodimer. Zn(2+) is required as a cofactor.

It localises to the cytoplasm. It carries out the reaction tRNA(Ser) + L-serine + ATP = L-seryl-tRNA(Ser) + AMP + diphosphate + H(+). The catalysed reaction is tRNA(Sec) + L-serine + ATP = L-seryl-tRNA(Sec) + AMP + diphosphate + H(+). It functions in the pathway aminoacyl-tRNA biosynthesis; selenocysteinyl-tRNA(Sec) biosynthesis; L-seryl-tRNA(Sec) from L-serine and tRNA(Sec): step 1/1. Its function is as follows. Catalyzes the attachment of serine to tRNA(Ser). Is also able to aminoacylate tRNA(Sec) with serine, to form the misacylated tRNA L-seryl-tRNA(Sec), which will be further converted into selenocysteinyl-tRNA(Sec). The sequence is that of Type-2 serine--tRNA ligase from Methanothrix thermoacetophila (strain DSM 6194 / JCM 14653 / NBRC 101360 / PT) (Methanosaeta thermophila).